Here is a 132-residue protein sequence, read N- to C-terminus: 3'-dehydrocarminate deglycosidase beta subunit (132 aa).

This sequence belongs to the C-glycoside deglycosidase beta subunit family. As to quaternary structure, heterodimer composed of an alpha subunit (CarB) and a beta subunit (CarC). Requires Mg(2+) as cofactor.

The catalysed reaction is 3'-dehydrocarminate + H(+) = kermesate + 1,5-anhydro-D-erythro-hex-1-en-3-ulose. Activity is strongly reduced in the presence of chelating agents. Its function is as follows. Carbon-carbon bond-cleaving enzyme which participates in a carminate degradation pathway. Cleaves the C-C bond in 3'-dehydrocarminate to form kermesate. Also shows weak activity with other C-glycosides, such as 3''-dehydropuerarin (3''-oxo-puerarin), 3''-dehydroisoorientin (3''-oxo-homoorientin) and 3'-dehydromangiferin (3'-oxo-mangiferin). This is 3'-dehydrocarminate deglycosidase beta subunit from Microbacterium sp.